An 81-amino-acid polypeptide reads, in one-letter code: MKQGIHPDYHPVVFRDISADTAFLTRSTVTSSTEIKWQDGNTYPVIDVDITSASHPFYTGKAKIVDTAGRVEKFNRRYGKK.

This sequence belongs to the bacterial ribosomal protein bL31 family. Type B subfamily. In terms of assembly, part of the 50S ribosomal subunit.

The polypeptide is Large ribosomal subunit protein bL31B (Cutibacterium acnes (strain DSM 16379 / KPA171202) (Propionibacterium acnes)).